The primary structure comprises 496 residues: Cytochrome P450 71D181 (496 aa).

A helical; Signal-anchor for type II membrane protein membrane pass occupies residues 1–21; it reads MDISISWVAIILVISSYFIFM. Cysteine 435 contributes to the heme binding site. Positions 471–496 are disordered; sequence MSETPGLSGPRKNPLIMVPTIHNPTS.

The protein belongs to the cytochrome P450 family. Heme is required as a cofactor. In terms of tissue distribution, expressed at low levels in flowers, leaves and stems.

It is found in the membrane. It carries out the reaction alpha-terpinene + 2 reduced [NADPH--hemoprotein reductase] + 2 O2 = carvacrol + 2 oxidized [NADPH--hemoprotein reductase] + 3 H2O + 2 H(+). It catalyses the reaction gamma-terpinene + 2 reduced [NADPH--hemoprotein reductase] + 2 O2 = carvacrol + 2 oxidized [NADPH--hemoprotein reductase] + 3 H2O + 2 H(+). The enzyme catalyses (4S)-limonene + reduced [NADPH--hemoprotein reductase] + O2 = (1S,5R)-carveol + oxidized [NADPH--hemoprotein reductase] + H2O + H(+). The catalysed reaction is (4R)-limonene + reduced [NADPH--hemoprotein reductase] + O2 = (1R,5S)-carveol + oxidized [NADPH--hemoprotein reductase] + H2O + H(+). Its pathway is secondary metabolite biosynthesis; terpenoid biosynthesis. Its function is as follows. Involved in the biosynthesis of phenolic monoterpenes natural products thymol and carvacrol which have a broad range of biological activities acting as antimicrobial compounds, insecticides, antioxidants and pharmaceutical agents. Catalyzes the C2-hydroxylation of gamma-terpinene and alpha-terpinene to produce carvacrol. Also mediates the C6-hydroxylation of (4S)-limonene and (4R)-limonene to form carveol. The sequence is that of Cytochrome P450 71D181 from Origanum vulgare (Wild marjoram).